The primary structure comprises 131 residues: Small ribosomal subunit protein uS8 (131 aa).

Belongs to the universal ribosomal protein uS8 family. As to quaternary structure, part of the 30S ribosomal subunit. Contacts proteins S5 and S12.

One of the primary rRNA binding proteins, it binds directly to 16S rRNA central domain where it helps coordinate assembly of the platform of the 30S subunit. This is Small ribosomal subunit protein uS8 from Polaromonas naphthalenivorans (strain CJ2).